A 981-amino-acid polypeptide reads, in one-letter code: Helicase-like transcription factor CHR28 (981 aa).

2 disordered regions span residues 1–66 (MDSA…LDSR) and 112–194 (KRTH…RNSE). The span at 46 to 65 (SGSSSGANGHTKTGLTNLDS) shows a compositional bias: polar residues. The span at 119-128 (FSRPPFPPRP) shows a compositional bias: pro residues. Residues 166–176 (HGTSASPSHFN) show a composition bias toward polar residues. Residues 181–194 (PMHRNGIGEERNSE) show a composition bias toward basic and acidic residues. One can recognise a Helicase ATP-binding domain in the interval 241–526 (ETNSLHCMGG…YSYFRFLKYD (286 aa)). ATP is bound at residue 254-261 (DDQGLGKT). Disordered regions lie at residues 293 to 337 (DADD…RKFN) and 439 to 462 (VVGT…SDPD). Positions 439-451 (VVGTTKKSKKKKG) are enriched in basic residues. Residues 679–718 (CCVCHDPPEDPVVTLCGHIFCYQCVSDYITGDEDTCPAPR) form an RING-type; degenerate zinc finger. A compositionally biased stretch (polar residues) spans 779–798 (NQGTSNSTQNGQMASSSQQP). Residues 779 to 808 (NQGTSNSTQNGQMASSSQQPNDDDDDDDDD) are disordered. Residues 799-808 (NDDDDDDDDD) show a composition bias toward acidic residues. In terms of domain architecture, Helicase C-terminal spans 804-976 (DDDDDVTIVE…ATRLTVDDLK (173 aa)).

This sequence belongs to the SNF2/RAD54 helicase family. RAD16 subfamily. In terms of assembly, interacts with SUVR2.

It localises to the nucleus. Probable helicase-like transcription factor involved in transcriptional gene silencing. Associates with SUVR2 and contributes to transcriptional gene silencing at RNA-directed DNA methylation (RdDM) target loci but also at RdDM-independent target loci. May be involved in nucleosome positioning to form ordered nucleosome arrays on chromatin. Associates with SUVR2 and functions redundantly with FRG1. Required for the efficient methylation of a broad range of RdDM target loci. The chain is Helicase-like transcription factor CHR28 from Arabidopsis thaliana (Mouse-ear cress).